Here is a 117-residue protein sequence, read N- to C-terminus: UPF0122 protein Teth514_1714 (117 aa).

It belongs to the UPF0122 family.

Might take part in the signal recognition particle (SRP) pathway. This is inferred from the conservation of its genetic proximity to ftsY/ffh. May be a regulatory protein. In Thermoanaerobacter sp. (strain X514), this protein is UPF0122 protein Teth514_1714.